Consider the following 121-residue polypeptide: Putative iron-sulfur cluster insertion protein ErpA (121 aa).

Positions 49, 113, and 115 each coordinate iron-sulfur cluster.

This sequence belongs to the HesB/IscA family. As to quaternary structure, homodimer. It depends on iron-sulfur cluster as a cofactor.

In terms of biological role, required for insertion of 4Fe-4S clusters. The protein is Putative iron-sulfur cluster insertion protein ErpA of Nitrosomonas eutropha (strain DSM 101675 / C91 / Nm57).